The following is a 478-amino-acid chain: ATP synthase subunit beta (478 aa).

163–170 (GGAGVGKT) is a binding site for ATP.

Belongs to the ATPase alpha/beta chains family. In terms of assembly, F-type ATPases have 2 components, CF(1) - the catalytic core - and CF(0) - the membrane proton channel. CF(1) has five subunits: alpha(3), beta(3), gamma(1), delta(1), epsilon(1). CF(0) has three main subunits: a(1), b(2) and c(9-12). The alpha and beta chains form an alternating ring which encloses part of the gamma chain. CF(1) is attached to CF(0) by a central stalk formed by the gamma and epsilon chains, while a peripheral stalk is formed by the delta and b chains.

The protein localises to the cell inner membrane. The catalysed reaction is ATP + H2O + 4 H(+)(in) = ADP + phosphate + 5 H(+)(out). In terms of biological role, produces ATP from ADP in the presence of a proton gradient across the membrane. The catalytic sites are hosted primarily by the beta subunits. The polypeptide is ATP synthase subunit beta (Aquifex pyrophilus).